Reading from the N-terminus, the 404-residue chain is Tryptophan synthase beta chain (404 aa).

Lysine 98 carries the post-translational modification N6-(pyridoxal phosphate)lysine.

Belongs to the TrpB family. In terms of assembly, tetramer of two alpha and two beta chains. The cofactor is pyridoxal 5'-phosphate.

The catalysed reaction is (1S,2R)-1-C-(indol-3-yl)glycerol 3-phosphate + L-serine = D-glyceraldehyde 3-phosphate + L-tryptophan + H2O. Its pathway is amino-acid biosynthesis; L-tryptophan biosynthesis; L-tryptophan from chorismate: step 5/5. The beta subunit is responsible for the synthesis of L-tryptophan from indole and L-serine. This is Tryptophan synthase beta chain from Rhodopseudomonas palustris (strain HaA2).